The sequence spans 406 residues: Phosphorylase b kinase gamma catalytic chain, liver/testis isoform (406 aa).

A Protein kinase domain is found at Tyr-24–Phe-291. ATP contacts are provided by residues Ile-30–Val-38 and Lys-53. Asp-153 acts as the Proton acceptor in catalysis. The interval Gln-306–Pro-330 is calmodulin-binding (domain-N). The calmodulin-binding (domain-C) stretch occupies residues Val-346 to Arg-370.

It belongs to the protein kinase superfamily. CAMK Ser/Thr protein kinase family. In terms of assembly, hexadecamer of 4 heterotetramers, each composed of alpha, beta, gamma, and delta subunits. Alpha (PHKA1 or PHKA2) and beta (PHKB) are regulatory subunits, gamma (PHKG1 or PHKG2) is the catalytic subunit, and delta is calmodulin.

The catalysed reaction is 2 ATP + phosphorylase b = 2 ADP + phosphorylase a.. Catalytic subunit of the phosphorylase b kinase (PHK), which mediates the neural and hormonal regulation of glycogen breakdown (glycogenolysis) by phosphorylating and thereby activating glycogen phosphorylase. May regulate glycogeneolysis in the testis. In vitro, phosphorylates PYGM. The chain is Phosphorylase b kinase gamma catalytic chain, liver/testis isoform (Phkg2) from Rattus norvegicus (Rat).